A 47-amino-acid polypeptide reads, in one-letter code: Bacteriocin curvaticin DN317 (47 aa).

It belongs to the bacteriocin class IIA/YGNGV family.

Its subcellular location is the secreted. Has bactericidal activity against various Gram-negative Campylobacter, and the Gram-positive L.monocytogenes and B.subtilis. In vitro, inhibits C.jejuni strain ATCC 33560 (MIC=27.3 ug/ml). This chain is Bacteriocin curvaticin DN317, found in Latilactobacillus curvatus (Lactobacillus curvatus).